The following is a 332-amino-acid chain: DNA-directed RNA polymerase subunit alpha (332 aa).

The interval 1–231 (MQTNLLKPKT…EQLAVFAQLD (231 aa)) is alpha N-terminal domain (alpha-NTD). Residues 252–332 (FDPILLRPVD…NWPPAGLEKR (81 aa)) are alpha C-terminal domain (alpha-CTD).

It belongs to the RNA polymerase alpha chain family. Homodimer. The RNAP catalytic core consists of 2 alpha, 1 beta, 1 beta' and 1 omega subunit. When a sigma factor is associated with the core the holoenzyme is formed, which can initiate transcription.

The catalysed reaction is RNA(n) + a ribonucleoside 5'-triphosphate = RNA(n+1) + diphosphate. In terms of biological role, DNA-dependent RNA polymerase catalyzes the transcription of DNA into RNA using the four ribonucleoside triphosphates as substrates. The polypeptide is DNA-directed RNA polymerase subunit alpha (Delftia acidovorans (strain DSM 14801 / SPH-1)).